A 1043-amino-acid chain; its full sequence is Isoleucine--tRNA ligase (1043 aa).

The short motif at 48 to 58 (PFATGLPHYGH) is the 'HIGH' region element. The short motif at 591–595 (KMSKR) is the 'KMSKS' region element. Residue lysine 594 coordinates ATP.

It belongs to the class-I aminoacyl-tRNA synthetase family. IleS type 2 subfamily. In terms of assembly, monomer. Zn(2+) is required as a cofactor.

The protein localises to the cytoplasm. It carries out the reaction tRNA(Ile) + L-isoleucine + ATP = L-isoleucyl-tRNA(Ile) + AMP + diphosphate. Its function is as follows. Catalyzes the attachment of isoleucine to tRNA(Ile). As IleRS can inadvertently accommodate and process structurally similar amino acids such as valine, to avoid such errors it has two additional distinct tRNA(Ile)-dependent editing activities. One activity is designated as 'pretransfer' editing and involves the hydrolysis of activated Val-AMP. The other activity is designated 'posttransfer' editing and involves deacylation of mischarged Val-tRNA(Ile). The sequence is that of Isoleucine--tRNA ligase from Chlamydia pneumoniae (Chlamydophila pneumoniae).